A 594-amino-acid chain; its full sequence is MLPAQKHTLETLLENSVKQVVQASKGDADAAFVLPAIALERPKVAAHGDVACNVALQLAKPLGANPRQLAEQIVAALTAQPEAAGLVDAAEIAGPGFINLRLTPASKQAVIGAVLAQGRAFGASERDHDKRVLLEFVSANPTGPLHVGHGRQAALGDALANVLASQGYAVHREFYYNDAGVQIGNLAISTQARARGLKPGDAGWPEAAYNGEYIADIARDYLNGETVAASDGEPVTGKRDVEDLEAIRKFAVTYLRREQDMDLKAFGVKFDQYYLESSLYTEGRVEKTVDALIAAGMTYEQEGALWLRTTDEGDDKDRVMRKTDGTYTYFVPDVAYHVTKWERGFTKVINIQGSDHHGTIARVRAGLQGLHIGIPKGYPDYVLHKMVTVMRDGQEVKISKRAGSYVTVRDLIEWSGGATPGSEGSPELLDEATITRGRDAVRFFLISRKADTEFVFDIDLALKQNDENPVYYVQYAHARICSVINEWKSRYGATDALLPGADLSPLDSKQAMALMQKLAEYPDVLAHAAGELAPHAVAFYLRELASEFHSFYNAERVLVDEQAPRTARVALLAATRQVLENGLAMLGVSAPSKM.

The short motif at 139–149 is the 'HIGH' region element; that stretch reads ANPTGPLHVGH.

This sequence belongs to the class-I aminoacyl-tRNA synthetase family. As to quaternary structure, monomer.

The protein resides in the cytoplasm. The catalysed reaction is tRNA(Arg) + L-arginine + ATP = L-arginyl-tRNA(Arg) + AMP + diphosphate. This Burkholderia mallei (strain NCTC 10247) protein is Arginine--tRNA ligase.